The chain runs to 422 residues: UDP-N-acetylglucosamine 1-carboxyvinyltransferase (422 aa).

Phosphoenolpyruvate is bound at residue 22 to 23 (KN). R93 lines the UDP-N-acetyl-alpha-D-glucosamine pocket. C117 functions as the Proton donor in the catalytic mechanism. A 2-(S-cysteinyl)pyruvic acid O-phosphothioketal modification is found at C117. Residues 122 to 126 (RPVDQ), D305, and I327 each bind UDP-N-acetyl-alpha-D-glucosamine.

It belongs to the EPSP synthase family. MurA subfamily.

The protein localises to the cytoplasm. It catalyses the reaction phosphoenolpyruvate + UDP-N-acetyl-alpha-D-glucosamine = UDP-N-acetyl-3-O-(1-carboxyvinyl)-alpha-D-glucosamine + phosphate. It participates in cell wall biogenesis; peptidoglycan biosynthesis. Functionally, cell wall formation. Adds enolpyruvyl to UDP-N-acetylglucosamine. This Bordetella bronchiseptica (strain ATCC BAA-588 / NCTC 13252 / RB50) (Alcaligenes bronchisepticus) protein is UDP-N-acetylglucosamine 1-carboxyvinyltransferase.